Here is a 102-residue protein sequence, read N- to C-terminus: NADH-quinone oxidoreductase subunit K (102 aa).

Helical transmembrane passes span L6 to V26, I30 to V50, and V62 to L82.

Belongs to the complex I subunit 4L family. In terms of assembly, NDH-1 is composed of 13 different subunits. Subunits NuoA, H, J, K, L, M, N constitute the membrane sector of the complex.

The protein resides in the cell inner membrane. The enzyme catalyses a quinone + NADH + 5 H(+)(in) = a quinol + NAD(+) + 4 H(+)(out). Functionally, NDH-1 shuttles electrons from NADH, via FMN and iron-sulfur (Fe-S) centers, to quinones in the respiratory chain. The immediate electron acceptor for the enzyme in this species is believed to be ubiquinone. Couples the redox reaction to proton translocation (for every two electrons transferred, four hydrogen ions are translocated across the cytoplasmic membrane), and thus conserves the redox energy in a proton gradient. This chain is NADH-quinone oxidoreductase subunit K, found in Pseudomonas aeruginosa (strain LESB58).